A 476-amino-acid chain; its full sequence is Bifunctional protein HldE (476 aa).

The interval 1–318 is ribokinase; that stretch reads MKPILPDYSQ…AEAIHGSQDT (318 aa). 195–198 lines the ATP pocket; the sequence is NMAE. Aspartate 264 is a catalytic residue. A cytidylyltransferase region spans residues 344–476; that stretch reads MTNGCFDILH…IIKAIKGGRG (133 aa).

The protein in the N-terminal section; belongs to the carbohydrate kinase PfkB family. It in the C-terminal section; belongs to the cytidylyltransferase family. Homodimer.

The enzyme catalyses D-glycero-beta-D-manno-heptose 7-phosphate + ATP = D-glycero-beta-D-manno-heptose 1,7-bisphosphate + ADP + H(+). It catalyses the reaction D-glycero-beta-D-manno-heptose 1-phosphate + ATP + H(+) = ADP-D-glycero-beta-D-manno-heptose + diphosphate. Its pathway is nucleotide-sugar biosynthesis; ADP-L-glycero-beta-D-manno-heptose biosynthesis; ADP-L-glycero-beta-D-manno-heptose from D-glycero-beta-D-manno-heptose 7-phosphate: step 1/4. The protein operates within nucleotide-sugar biosynthesis; ADP-L-glycero-beta-D-manno-heptose biosynthesis; ADP-L-glycero-beta-D-manno-heptose from D-glycero-beta-D-manno-heptose 7-phosphate: step 3/4. Its function is as follows. Catalyzes the phosphorylation of D-glycero-D-manno-heptose 7-phosphate at the C-1 position to selectively form D-glycero-beta-D-manno-heptose-1,7-bisphosphate. In terms of biological role, catalyzes the ADP transfer from ATP to D-glycero-beta-D-manno-heptose 1-phosphate, yielding ADP-D-glycero-beta-D-manno-heptose. The protein is Bifunctional protein HldE of Vibrio atlanticus (strain LGP32) (Vibrio splendidus (strain Mel32)).